Here is a 311-residue protein sequence, read N- to C-terminus: Methionyl-tRNA formyltransferase (311 aa).

(6S)-5,6,7,8-tetrahydrofolate is bound at residue 109 to 112 (SLLP).

Belongs to the Fmt family.

It catalyses the reaction L-methionyl-tRNA(fMet) + (6R)-10-formyltetrahydrofolate = N-formyl-L-methionyl-tRNA(fMet) + (6S)-5,6,7,8-tetrahydrofolate + H(+). Functionally, attaches a formyl group to the free amino group of methionyl-tRNA(fMet). The formyl group appears to play a dual role in the initiator identity of N-formylmethionyl-tRNA by promoting its recognition by IF2 and preventing the misappropriation of this tRNA by the elongation apparatus. The sequence is that of Methionyl-tRNA formyltransferase from Staphylococcus aureus (strain bovine RF122 / ET3-1).